We begin with the raw amino-acid sequence, 156 residues long: Small ribosomal subunit protein uS7 (156 aa).

This sequence belongs to the universal ribosomal protein uS7 family. As to quaternary structure, part of the 30S ribosomal subunit. Contacts proteins S9 and S11.

One of the primary rRNA binding proteins, it binds directly to 16S rRNA where it nucleates assembly of the head domain of the 30S subunit. Is located at the subunit interface close to the decoding center, probably blocks exit of the E-site tRNA. The sequence is that of Small ribosomal subunit protein uS7 from Polynucleobacter necessarius subsp. necessarius (strain STIR1).